Consider the following 352-residue polypeptide: Selenide, water dikinase (352 aa).

Cys23 is a catalytic residue. ATP contacts are provided by residues Lys26 and 54–56 (SRD). Position 57 (Asp57) interacts with Mg(2+). ATP-binding positions include Asp74, Asp97, and 145-147 (GHS). Residue Asp97 coordinates Mg(2+). Asp233 is a Mg(2+) binding site.

This sequence belongs to the selenophosphate synthase 1 family. Class I subfamily. In terms of assembly, homodimer. It depends on Mg(2+) as a cofactor.

It catalyses the reaction hydrogenselenide + ATP + H2O = selenophosphate + AMP + phosphate + 2 H(+). Synthesizes selenophosphate from selenide and ATP. This Shewanella sp. (strain MR-7) protein is Selenide, water dikinase.